The primary structure comprises 192 residues: Large ribosomal subunit protein bL9 (192 aa).

The interval 172–192 is disordered; the sequence is DALRPEDFFDPEADGVDEDEA. The span at 179 to 192 shows a compositional bias: acidic residues; that stretch reads FFDPEADGVDEDEA.

This sequence belongs to the bacterial ribosomal protein bL9 family.

Functionally, binds to the 23S rRNA. The sequence is that of Large ribosomal subunit protein bL9 from Rhizobium leguminosarum bv. trifolii (strain WSM2304).